The chain runs to 299 residues: ATP phosphoribosyltransferase (299 aa).

The protein belongs to the ATP phosphoribosyltransferase family. Long subfamily. As to quaternary structure, equilibrium between an active dimeric form, an inactive hexameric form and higher aggregates. Interconversion between the various forms is largely reversible and is influenced by the natural substrates and inhibitors of the enzyme. It depends on Mg(2+) as a cofactor.

It is found in the cytoplasm. It catalyses the reaction 1-(5-phospho-beta-D-ribosyl)-ATP + diphosphate = 5-phospho-alpha-D-ribose 1-diphosphate + ATP. It functions in the pathway amino-acid biosynthesis; L-histidine biosynthesis; L-histidine from 5-phospho-alpha-D-ribose 1-diphosphate: step 1/9. Its activity is regulated as follows. Feedback inhibited by histidine. Its function is as follows. Catalyzes the condensation of ATP and 5-phosphoribose 1-diphosphate to form N'-(5'-phosphoribosyl)-ATP (PR-ATP). Has a crucial role in the pathway because the rate of histidine biosynthesis seems to be controlled primarily by regulation of HisG enzymatic activity. The polypeptide is ATP phosphoribosyltransferase (Serratia proteamaculans (strain 568)).